A 448-amino-acid polypeptide reads, in one-letter code: Inositol hexakisphosphate kinase 2 (448 aa).

ATP-binding positions include 229–231 and Asp-242; that span reads ENL. Substrate is bound by residues 238 to 246, Lys-244, and 258 to 265; these read PCVLDLKMG and KAANQIRK. Asp-405 is a binding site for ATP. His-408 serves as a coordination point for substrate.

The protein belongs to the inositol phosphokinase (IPK) family. In terms of tissue distribution, highly expressed in brain and lung, and at slightly lower levels in liver, kidney and testis.

It localises to the nucleus. It carries out the reaction 1D-myo-inositol hexakisphosphate + ATP = 5-diphospho-1D-myo-inositol 1,2,3,4,6-pentakisphosphate + ADP. The protein operates within phospholipid metabolism; phosphatidylinositol metabolism. Converts inositol hexakisphosphate (InsP6) to diphosphoinositol pentakisphosphate (InsP7/PP-InsP5). May play a role in the regulation of Na(+)-dependent phosphate cotransport, possibly via its role in diphosphoinositol pentakisphosphate (InsP7/PP-InsP5) biosynthesis. The polypeptide is Inositol hexakisphosphate kinase 2 (Ip6k2) (Mus musculus (Mouse)).